The sequence spans 229 residues: Uracil-DNA glycosylase (229 aa).

Catalysis depends on aspartate 64, which acts as the Proton acceptor.

The protein belongs to the uracil-DNA glycosylase (UDG) superfamily. UNG family.

The protein localises to the cytoplasm. It carries out the reaction Hydrolyzes single-stranded DNA or mismatched double-stranded DNA and polynucleotides, releasing free uracil.. In terms of biological role, excises uracil residues from the DNA which can arise as a result of misincorporation of dUMP residues by DNA polymerase or due to deamination of cytosine. This Klebsiella pneumoniae (strain 342) protein is Uracil-DNA glycosylase.